Here is a 123-residue protein sequence, read N- to C-terminus: Large ribosomal subunit protein bL19c (123 aa).

The protein belongs to the bacterial ribosomal protein bL19 family.

The protein resides in the plastid. The protein localises to the chloroplast. The chain is Large ribosomal subunit protein bL19c (rpl19) from Porphyra purpurea (Red seaweed).